Here is a 655-residue protein sequence, read N- to C-terminus: p-hydroxybenzoic acid efflux pump subunit AaeB (655 aa).

Topologically, residues 1-12 are periplasmic; the sequence is MGIFSIANQHIR. A helical transmembrane segment spans residues 13-33; it reads FAVKLATAIVLALFVGFHFQL. Residues 34 to 37 lie on the Cytoplasmic side of the membrane; sequence ETPR. Residues 38–58 form a helical membrane-spanning segment; that stretch reads WAVLTAAIVAAGPAFAAGGEP. At 59–68 the chain is on the periplasmic side; the sequence is YSGAIRYRGF. A helical transmembrane segment spans residues 69–89; the sequence is LRIIGTFIGCIAGLVIIIAMI. Topologically, residues 90-92 are cytoplasmic; sequence RAP. The helical transmembrane segment at 93–113 threads the bilayer; the sequence is LLMILVCCIWAGFCTWISSLV. Topologically, residues 114-120 are periplasmic; sequence RIENSYA. The helical transmembrane segment at 121-141 threads the bilayer; sequence WGLAGYTALIIVITIQPEPLL. The Cytoplasmic portion of the chain corresponds to 142–151; the sequence is TPQFAVERCS. Residues 152 to 172 traverse the membrane as a helical segment; the sequence is EIVIGIVCAIMADLLFSPRSI. The Periplasmic portion of the chain corresponds to 173–369; that stretch reads KQEVDRELES…RTTLSCILGT (197 aa). A helical transmembrane segment spans residues 370–390; that stretch reads LFWLWTGWTSGSGAMVMIAVV. At 391–406 the chain is on the cytoplasmic side; sequence TSLAMRLPNPRMVAID. The helical transmembrane segment at 407–427 threads the bilayer; it reads FIYGTLAALPLGLLYFLVIIP. Residues 428 to 430 lie on the Periplasmic side of the membrane; sequence NTQ. The helical transmembrane segment at 431-451 threads the bilayer; the sequence is QSMLLLCISLAVLGFFLGIEV. Residues 452–458 lie on the Cytoplasmic side of the membrane; it reads QKRRLGS. The helical transmembrane segment at 459-479 threads the bilayer; sequence MGALASTINIIVLDNPMTFHF. Residues 480 to 481 are Periplasmic-facing; sequence SQ. A helical membrane pass occupies residues 482-502; that stretch reads FLDSALGQIVGCVLAFTVILL. Residues 503-655 lie on the Cytoplasmic side of the membrane; it reads VRDKSRDRTG…HKYQHALTDS (153 aa).

Belongs to the aromatic acid exporter ArAE (TC 2.A.85) family.

Its subcellular location is the cell inner membrane. Its function is as follows. Forms an efflux pump with AaeA. Could function as a metabolic relief valve, allowing to eliminate certain compounds when they accumulate to high levels in the cell. The chain is p-hydroxybenzoic acid efflux pump subunit AaeB from Shigella flexneri.